A 165-amino-acid polypeptide reads, in one-letter code: PTS system glucose-specific EIIA component (165 aa).

The PTS EIIA type-1 domain occupies 34–138 (DPVFAQKMMG…SSITPIIISN (105 aa)). H71 and H86 together coordinate Zn(2+). The active-site Tele-phosphohistidine intermediate; for EIIA activity is H86. H86 carries the post-translational modification Phosphohistidine; by HPr.

As to quaternary structure, heterodimer with glycerol kinase (glpk). Zn(2+) serves as cofactor.

The protein resides in the cytoplasm. Functionally, the phosphoenolpyruvate-dependent sugar phosphotransferase system (sugar PTS), a major carbohydrate active transport system, catalyzes the phosphorylation of incoming sugar substrates concomitantly with their translocation across the cell membrane. The enzyme II complex composed of PtsG and Crr is involved in glucose transport. The sequence is that of PTS system glucose-specific EIIA component (crr) from Oceanobacillus iheyensis (strain DSM 14371 / CIP 107618 / JCM 11309 / KCTC 3954 / HTE831).